Consider the following 248-residue polypeptide: 2,3-bisphosphoglycerate-dependent phosphoglycerate mutase (248 aa).

Residues 8-15 (RHGESEWN), 21-22 (TG), R60, 87-90 (ERHY), K98, 114-115 (RR), and 183-184 (GN) each bind substrate. H9 acts as the Tele-phosphohistidine intermediate in catalysis. The active-site Proton donor/acceptor is E87.

The protein belongs to the phosphoglycerate mutase family. BPG-dependent PGAM subfamily.

It catalyses the reaction (2R)-2-phosphoglycerate = (2R)-3-phosphoglycerate. Its pathway is carbohydrate degradation; glycolysis; pyruvate from D-glyceraldehyde 3-phosphate: step 3/5. Functionally, catalyzes the interconversion of 2-phosphoglycerate and 3-phosphoglycerate. This chain is 2,3-bisphosphoglycerate-dependent phosphoglycerate mutase, found in Borrelia garinii subsp. bavariensis (strain ATCC BAA-2496 / DSM 23469 / PBi) (Borreliella bavariensis).